The primary structure comprises 397 residues: Protein RecA (397 aa).

The segment at 1 to 23 (MALETKPAKDPAAEDKHELDPKR) is disordered. 83 to 90 (GPESSGKT) contacts ATP.

The protein belongs to the RecA family.

Its subcellular location is the cytoplasm. Can catalyze the hydrolysis of ATP in the presence of single-stranded DNA, the ATP-dependent uptake of single-stranded DNA by duplex DNA, and the ATP-dependent hybridization of homologous single-stranded DNAs. It interacts with LexA causing its activation and leading to its autocatalytic cleavage. This chain is Protein RecA, found in Bifidobacterium longum (strain NCC 2705).